We begin with the raw amino-acid sequence, 187 residues long: Small ribosomal subunit protein uS4 (187 aa).

The S4 RNA-binding domain occupies 105–174 (RRLQTLVFRK…DNHPERAKIV (70 aa)).

Belongs to the universal ribosomal protein uS4 family. In terms of assembly, part of the 30S ribosomal subunit. Contacts protein S5. The interaction surface between S4 and S5 is involved in control of translational fidelity.

In terms of biological role, one of the primary rRNA binding proteins, it binds directly to 16S rRNA where it nucleates assembly of the body of the 30S subunit. Functionally, with S5 and S12 plays an important role in translational accuracy. In Methanocaldococcus jannaschii (strain ATCC 43067 / DSM 2661 / JAL-1 / JCM 10045 / NBRC 100440) (Methanococcus jannaschii), this protein is Small ribosomal subunit protein uS4.